The following is a 561-amino-acid chain: Asparagine synthetase [glutamine-hydrolyzing] (561 aa).

The For GATase activity role is filled by C2. Positions 2 to 191 constitute a Glutamine amidotransferase type-2 domain; that stretch reads CGIWALFGSD…PGHYEVLDLK (190 aa). L-glutamine contacts are provided by residues 49–53, 75–77, and D97; these read RLAVV and NGE. The Asparagine synthetase domain occupies 213-536; it reads HALYDGVEKL…PGRADWLPHY (324 aa). Residues L256, I288, and 363 to 364 each bind ATP; that span reads SG. K385 bears the N6-acetyllysine mark. At T545 the chain carries Phosphothreonine.

It carries out the reaction L-aspartate + L-glutamine + ATP + H2O = L-asparagine + L-glutamate + AMP + diphosphate + H(+). It functions in the pathway amino-acid biosynthesis; L-asparagine biosynthesis; L-asparagine from L-aspartate (L-Gln route): step 1/1. In Bos taurus (Bovine), this protein is Asparagine synthetase [glutamine-hydrolyzing] (ASNS).